We begin with the raw amino-acid sequence, 316 residues long: MYRTVLSVFYPMFFILVIPSLILLIFIILRYSPDCFQTFKYILLVTCISQIVAVTTNCLIQIRQVSNLTPMEIWCYGPLRHFTALIAYSTYFLTQTAVVISNVLIFLTIYLKYLATKINTRKTCNYGVTFFILSPIFIALGAQTSLILTEGIPSENQDHLEKINFDISDHAVIGYIRLKTLPSIIITFVITGTILILPAVGLLLRKKTLRNINSNKFSITKKALIKGFINGVTLQVFLPLICYIPVFGSFLVLAETKTEVPFEQYFFSVLVMLPMLFDPYIILYSVAPYRKQIEKWIKTKRRQSILIVDPAARIGF.

The next 7 helical transmembrane spans lie at 8–28 (VFYP…IFII), 42–62 (ILLV…LIQI), 91–111 (YFLT…TIYL), 128–148 (VTFF…SLIL), 184–204 (IIIT…GLLL), 234–254 (LQVF…LVLA), and 266–286 (FFSV…LYSV).

This sequence belongs to the nematode receptor-like protein srd family.

It localises to the membrane. In Caenorhabditis elegans, this protein is Serpentine receptor class delta-45 (srd-45).